A 333-amino-acid polypeptide reads, in one-letter code: Phosphate acyltransferase (333 aa).

This sequence belongs to the PlsX family. As to quaternary structure, homodimer. Probably interacts with PlsY.

Its subcellular location is the cytoplasm. The catalysed reaction is a fatty acyl-[ACP] + phosphate = an acyl phosphate + holo-[ACP]. Its pathway is lipid metabolism; phospholipid metabolism. In terms of biological role, catalyzes the reversible formation of acyl-phosphate (acyl-PO(4)) from acyl-[acyl-carrier-protein] (acyl-ACP). This enzyme utilizes acyl-ACP as fatty acyl donor, but not acyl-CoA. In Desulforamulus reducens (strain ATCC BAA-1160 / DSM 100696 / MI-1) (Desulfotomaculum reducens), this protein is Phosphate acyltransferase.